Here is a 649-residue protein sequence, read N- to C-terminus: Sodium/nucleoside cotransporter 1 (649 aa).

At 1 to 80 (MENDPSRRRE…ARSFCREHMQ (80 aa)) the chain is on the cytoplasmic side. Residues 81–104 (LFRWIGTGLLCTGLSAFLLVACLL) traverse the membrane as a helical segment. Over 105 to 109 (DFQRA) the chain is Extracellular. A helical membrane pass occupies residues 110 to 128 (LALFVLTCVVLTFLGHRLL). Residues 129–147 (KRLLGPKLRRFLKPQGHPR) are Cytoplasmic-facing. Residues 148–167 (LLLWFKRGLALAAFLGLVLW) form a helical membrane-spanning segment. The Extracellular segment spans residues 168-178 (LSLDTSQRPEQ). The chain crosses the membrane as a helical span at residues 179 to 195 (LVSFAGICVFVALLFAC). The Cytoplasmic portion of the chain corresponds to 196-201 (SKHHCA). The chain crosses the membrane as a helical span at residues 202–222 (VSWRAVSWGLGLQFVLGLLVI). Over 223 to 261 (RTEPGFIAFEWLGEQIRIFLSYTKAGSSFVFGEALVKDV) the chain is Extracellular. Residues 262-283 (FAFQVLPIIVFFSCVISVLYHV) traverse the membrane as a helical segment. Residues 284–294 (GLMQWVILKIA) are Cytoplasmic-facing. Residues 295 to 318 (WLMQVTMGTTATETLSVAGNIFVS) traverse the membrane as a helical segment. Residues 319–337 (QTEAPLLIRPYLADMTLSE) are Extracellular-facing. Residues 338 to 360 (VHVVMTGGYATIAGSLLGAYISF) traverse the membrane as a helical segment. At 361 to 366 (GIDATS) the chain is on the cytoplasmic side. The chain crosses the membrane as a helical span at residues 367–386 (LIAASVMAAPCALALSKLVY). The Extracellular segment spans residues 387-423 (PEVEESKFRREEGVKLTYGDAQNLIEAASTGAAISVK). Residues 424 to 446 (VVANIAANLIAFLAVLDFINAAL) form a helical membrane-spanning segment. At 447–457 (SWLGDMVDIQG) the chain is on the cytoplasmic side. The helical transmembrane segment at 458 to 479 (LSFQLICSYILRPVAFLMGVAW) threads the bilayer. Residues 480-534 (EDCPVVAELLGIKLFLNEFVAYQDLSKYKQRRLAGAEEWVGDRKQWISVRAEVLT) are Extracellular-facing. A helical transmembrane segment spans residues 535-558 (TFALCGFANFSSIGIMLGGLTSMV). At 559-569 (PQRKSDFSQIV) the chain is on the cytoplasmic side. The helical transmembrane segment at 570-592 (LRALFTGACVSLVNACMAGILYM) threads the bilayer. At 593-649 (PRGAEVDCMSLLNTTLSSSSFEIYQCCREAFQSVNPEFSPEALDNCCRFYNHTICAQ) the chain is on the extracellular side. Asn605 and Asn643 each carry an N-linked (GlcNAc...) asparagine glycan.

The protein belongs to the concentrative nucleoside transporter (CNT) (TC 2.A.41) family. Post-translationally, N-glycosylated. N-glycosylation is required for localization to the plasma membrane and the transporter activity. As to expression, expressed in kidney.

The protein resides in the cell membrane. It localises to the apical cell membrane. It catalyses the reaction uridine(out) + Na(+)(out) = uridine(in) + Na(+)(in). It carries out the reaction thymidine(out) + Na(+)(out) = thymidine(in) + Na(+)(in). The enzyme catalyses cytidine(out) + Na(+)(out) = cytidine(in) + Na(+)(in). The catalysed reaction is adenosine(out) + Na(+)(out) = adenosine(in) + Na(+)(in). Its activity is regulated as follows. Due to its high apparent affinity but slow transport, adenosine could act as a negative regulator of pyrimidine transport under some conditions. Its function is as follows. Sodium and pyrimidine nucleoside symporter of the plasma membrane that imports uridine, thymidine and cytidine into cells by coupling their transport to the transmembrane sodium electrochemical gradient. Also transports adenosine, an atypical substrate transported with high apparent affinity, but low maximum velocity. Therefore, exhibits the transport characteristics of the nucleoside transport system cit or N2 subtype (N2/cit). Involved in renal nucleoside (re)absorption. The sequence is that of Sodium/nucleoside cotransporter 1 from Homo sapiens (Human).